The primary structure comprises 96 residues: Co-chaperonin GroES (96 aa).

Residues 26–48 (LLPGSAQEKPSQGEVLATGNGQI) form a disordered region.

This sequence belongs to the GroES chaperonin family. In terms of assembly, heptamer of 7 subunits arranged in a ring. Interacts with the chaperonin GroEL.

The protein localises to the cytoplasm. Functionally, together with the chaperonin GroEL, plays an essential role in assisting protein folding. The GroEL-GroES system forms a nano-cage that allows encapsulation of the non-native substrate proteins and provides a physical environment optimized to promote and accelerate protein folding. GroES binds to the apical surface of the GroEL ring, thereby capping the opening of the GroEL channel. This Psychrobacter arcticus (strain DSM 17307 / VKM B-2377 / 273-4) protein is Co-chaperonin GroES.